The chain runs to 393 residues: Chalcone synthase 3 (393 aa).

Cys166 is an active-site residue.

It belongs to the thiolase-like superfamily. Chalcone/stilbene synthases family.

It catalyses the reaction (E)-4-coumaroyl-CoA + 3 malonyl-CoA + 3 H(+) = 2',4,4',6'-tetrahydroxychalcone + 3 CO2 + 4 CoA. It participates in secondary metabolite biosynthesis; flavonoid biosynthesis. Functionally, the primary product of this enzyme is 4,2',4',6'-tetrahydroxychalcone (also termed naringenin-chalcone or chalcone) which can under specific conditions spontaneously isomerize into naringenin. The sequence is that of Chalcone synthase 3 (CHS3) from Ruta graveolens (Common rue).